We begin with the raw amino-acid sequence, 166 residues long: Urease accessory protein UreE (166 aa).

The tract at residues phenylalanine 132–proline 156 is disordered.

This sequence belongs to the UreE family.

The protein resides in the cytoplasm. In terms of biological role, involved in urease metallocenter assembly. Binds nickel. Probably functions as a nickel donor during metallocenter assembly. This Pseudomonas fluorescens (strain ATCC BAA-477 / NRRL B-23932 / Pf-5) protein is Urease accessory protein UreE.